Consider the following 261-residue polypeptide: Eukaryotic translation initiation factor 3 subunit G (261 aa).

The interval 156 to 180 is disordered; sequence QDADSKNALGLRGDGRQMERNRSDE. Residues 168–180 are compositionally biased toward basic and acidic residues; it reads GDGRQMERNRSDE. In terms of domain architecture, RRM spans 181-259; sequence NTCRVTNLPQ…MVLKVEWTRP (79 aa).

This sequence belongs to the eIF-3 subunit G family. In terms of assembly, component of the eukaryotic translation initiation factor 3 (eIF-3) complex.

It localises to the cytoplasm. Functionally, RNA-binding component of the eukaryotic translation initiation factor 3 (eIF-3) complex, which is involved in protein synthesis of a specialized repertoire of mRNAs and, together with other initiation factors, stimulates binding of mRNA and methionyl-tRNAi to the 40S ribosome. The eIF-3 complex specifically targets and initiates translation of a subset of mRNAs involved in cell proliferation. This subunit can bind 18S rRNA. This Caenorhabditis briggsae protein is Eukaryotic translation initiation factor 3 subunit G.